The sequence spans 382 residues: Acetylxylan esterase A (382 aa).

Positions 1–21 (MKSLSFSFLVTLFLYLTLSSA) are cleaved as a signal peptide. A propeptide spanning residues 22–31 (RTLGKDVNKR) is cleaved from the precursor. Residues 35-307 (GSLQQVTGFG…GAKDMEWFGF (273 aa)) form a catalytic region. An N-linked (GlcNAc...) asparagine glycan is attached at Asn-46. The active-site Charge relay system is the Ser-152. A glycan (N-linked (GlcNAc...) asparagine) is linked at Asn-194. Residues 308-345 (SGSGSSSTTTASATKTSTTSTTSTKTTSSTSSTTTSST) are ser/Thr-rich linker. The segment covering 313-345 (SSTTTASATKTSTTSTTSTKTTSSTSSTTTSST) has biased composition (low complexity). A disordered region spans residues 313 to 346 (SSTTTASATKTSTTSTTSTKTTSSTSSTTTSSTG). The region spanning 346–382 (GVAAHWGQCGGSGWTGPTVCESGYTCTYSNAWYSQCL) is the CBM1 domain.

Belongs to the carbohydrate esterase 1 (CE1) family. AxeA subfamily. As to quaternary structure, monomer. In terms of processing, glycosylated.

The protein localises to the secreted. It carries out the reaction Deacetylation of xylans and xylo-oligosaccharides.. It functions in the pathway glycan degradation; xylan degradation. With respect to regulation, inactivated by phenylmethylsulfonylfluorid (PMSF), a specific inhibitor of serine esterases. Its function is as follows. Acetylxylan esterase involved in the hydrolysis of xylan, a major structural heterogeneous polysaccharide found in plant biomass representing the second most abundant polysaccharide in the biosphere, after cellulose. Degrades acetylated xylans by cleaving acetyl side groups from the hetero-xylan backbone. The polypeptide is Acetylxylan esterase A (axeA) (Talaromyces purpureogenus (Soft rot fungus)).